We begin with the raw amino-acid sequence, 175 residues long: ATP synthase subunit b, chloroplastic (175 aa).

A helical transmembrane segment spans residues 22–42 (VFETNIINLAAVVGIVVSFVG).

The protein belongs to the ATPase B chain family. F-type ATPases have 2 components, F(1) - the catalytic core - and F(0) - the membrane proton channel. F(1) has five subunits: alpha(3), beta(3), gamma(1), delta(1), epsilon(1). F(0) has four main subunits: a(1), b(1), b'(1) and c(10-14). The alpha and beta chains form an alternating ring which encloses part of the gamma chain. F(1) is attached to F(0) by a central stalk formed by the gamma and epsilon chains, while a peripheral stalk is formed by the delta, b and b' chains.

The protein resides in the plastid. The protein localises to the chloroplast thylakoid membrane. In terms of biological role, f(1)F(0) ATP synthase produces ATP from ADP in the presence of a proton or sodium gradient. F-type ATPases consist of two structural domains, F(1) containing the extramembraneous catalytic core and F(0) containing the membrane proton channel, linked together by a central stalk and a peripheral stalk. During catalysis, ATP synthesis in the catalytic domain of F(1) is coupled via a rotary mechanism of the central stalk subunits to proton translocation. Functionally, component of the F(0) channel, it forms part of the peripheral stalk, linking F(1) to F(0). The sequence is that of ATP synthase subunit b, chloroplastic from Chlamydomonas reinhardtii (Chlamydomonas smithii).